The chain runs to 270 residues: 23S rRNA (adenosine(1067)-2'-O)-methyltransferase (270 aa).

S-adenosyl-L-methionine contacts are provided by R135, R165, G218, I238, and L247.

It belongs to the class IV-like SAM-binding methyltransferase superfamily. RNA methyltransferase TsnR/AvirB family.

It catalyses the reaction adenosine(1067) in 23S rRNA + S-adenosyl-L-methionine = 2'-O-methyladenosine(1067) in 23S rRNA + S-adenosyl-L-homocysteine + H(+). Its function is as follows. Specifically methylates the adenosine-1067 in 23S ribosomal RNA. Confers resistance to antibiotic thiostrepton. The sequence is that of 23S rRNA (adenosine(1067)-2'-O)-methyltransferase from Streptomyces laurentii.